The primary structure comprises 101 residues: Iron-sulfur cluster assembly protein CyaY (101 aa).

It belongs to the frataxin family.

Involved in iron-sulfur (Fe-S) cluster assembly. May act as a regulator of Fe-S biogenesis. The chain is Iron-sulfur cluster assembly protein CyaY from Actinobacillus pleuropneumoniae serotype 7 (strain AP76).